The chain runs to 476 residues: Glycogen synthase (476 aa).

Lys15 provides a ligand contact to ADP-alpha-D-glucose.

It belongs to the glycosyltransferase 1 family. Bacterial/plant glycogen synthase subfamily.

It carries out the reaction [(1-&gt;4)-alpha-D-glucosyl](n) + ADP-alpha-D-glucose = [(1-&gt;4)-alpha-D-glucosyl](n+1) + ADP + H(+). It functions in the pathway glycan biosynthesis; glycogen biosynthesis. Its function is as follows. Synthesizes alpha-1,4-glucan chains using ADP-glucose. The chain is Glycogen synthase from Leptospira biflexa serovar Patoc (strain Patoc 1 / Ames).